The chain runs to 625 residues: 1-deoxy-D-xylulose-5-phosphate synthase (625 aa).

Thiamine diphosphate-binding positions include histidine 74 and glycine 115 to serine 117. Aspartate 146 serves as a coordination point for Mg(2+). Thiamine diphosphate is bound by residues glycine 147–alanine 148, asparagine 175, tyrosine 286, and glutamate 367. Position 175 (asparagine 175) interacts with Mg(2+).

It belongs to the transketolase family. DXPS subfamily. In terms of assembly, homodimer. Requires Mg(2+) as cofactor. It depends on thiamine diphosphate as a cofactor.

The catalysed reaction is D-glyceraldehyde 3-phosphate + pyruvate + H(+) = 1-deoxy-D-xylulose 5-phosphate + CO2. Its pathway is metabolic intermediate biosynthesis; 1-deoxy-D-xylulose 5-phosphate biosynthesis; 1-deoxy-D-xylulose 5-phosphate from D-glyceraldehyde 3-phosphate and pyruvate: step 1/1. Catalyzes the acyloin condensation reaction between C atoms 2 and 3 of pyruvate and glyceraldehyde 3-phosphate to yield 1-deoxy-D-xylulose-5-phosphate (DXP). In Lachnoclostridium phytofermentans (strain ATCC 700394 / DSM 18823 / ISDg) (Clostridium phytofermentans), this protein is 1-deoxy-D-xylulose-5-phosphate synthase.